Here is a 463-residue protein sequence, read N- to C-terminus: Chromosomal replication initiator protein DnaA (463 aa).

The domain I, interacts with DnaA modulators stretch occupies residues 1-83 (MSTNQIILTD…LQLFQHYNNT (83 aa)). The interval 83–124 (TIKSIEIITKELPGTTQTVTELPTKTFADIGSSELNSENIFS) is domain II. The interval 125–343 (TLDVRFTFDN…GALNKVIAHS (219 aa)) is domain III, AAA+ region. Residues G171, G173, K174, and T175 each contribute to the ATP site. A domain IV, binds dsDNA region spans residues 344–463 (NFTLKEITLE…IHLLMKILQN (120 aa)).

It belongs to the DnaA family. In terms of assembly, oligomerizes as a right-handed, spiral filament on DNA at oriC.

Its subcellular location is the cytoplasm. Its function is as follows. Plays an essential role in the initiation and regulation of chromosomal replication. ATP-DnaA binds to the origin of replication (oriC) to initiate formation of the DNA replication initiation complex once per cell cycle. Binds the DnaA box (a 9 base pair repeat at the origin) and separates the double-stranded (ds)DNA. Forms a right-handed helical filament on oriC DNA; dsDNA binds to the exterior of the filament while single-stranded (ss)DNA is stabiized in the filament's interior. The ATP-DnaA-oriC complex binds and stabilizes one strand of the AT-rich DNA unwinding element (DUE), permitting loading of DNA polymerase. After initiation quickly degrades to an ADP-DnaA complex that is not apt for DNA replication. Binds acidic phospholipids. The sequence is that of Chromosomal replication initiator protein DnaA from Rickettsia africae (strain ESF-5).